We begin with the raw amino-acid sequence, 327 residues long: Zinc transport protein ZntB (327 aa).

Residues 1–271 lie on the Cytoplasmic side of the membrane; sequence METIYGSSLK…AMNRRTYTMS (271 aa). A helical membrane pass occupies residues 272–292; that stretch reads LLAMIFLPTTFLTGLFGVNLG. Over 293 to 300 the chain is Periplasmic; sequence GIPGNEYY. A helical transmembrane segment spans residues 301-321; that stretch reads LGFAIFCLLLFGLVLFVAWWL. Over 322–327 the chain is Cytoplasmic; that stretch reads KKSKWL.

It belongs to the CorA metal ion transporter (MIT) (TC 1.A.35) family.

The protein localises to the cell inner membrane. The enzyme catalyses Zn(2+)(out) + H(+)(out) = Zn(2+)(in) + H(+)(in). Zinc transporter. Acts as a Zn(2+):proton symporter, which likely mediates zinc ion uptake. The protein is Zinc transport protein ZntB of Photorhabdus laumondii subsp. laumondii (strain DSM 15139 / CIP 105565 / TT01) (Photorhabdus luminescens subsp. laumondii).